The primary structure comprises 88 residues: Period circadian protein (88 aa).

A disordered region spans residues 23–88 (VTNTSIAGTG…VTLTESLLNK (66 aa)). Tandem repeats lie at residues 30-31 (GT), 33-34 (GT), 35-36 (GT), 37-38 (GT), 39-40 (GT), 41-42 (GT), 43-44 (GT), 45-46 (GT), 47-48 (GT), 49-50 (GT), 51-52 (GT), 53-54 (GT), 55-56 (GT), 57-58 (GT), 59-60 (GT), and 61-62 (GN). Positions 30–62 (GTGGTGTGTGTGTGTGTGTGTGTGTGTGTGTGN) are 16 X 2 AA tandem repeats of G-[TN]. Gly residues predominate over residues 30-62 (GTGGTGTGTGTGTGTGTGTGTGTGTGTGTGTGN). Polar residues predominate over residues 79–88 (VTLTESLLNK).

In terms of assembly, forms a heterodimer with timeless (TIM); the complex then translocates into the nucleus. In terms of processing, phosphorylated with a circadian rhythmicity, probably by the double-time protein (dbt). Phosphorylation could be implicated in the stability of per monomer and in the formation of heterodimer per-tim.

The protein resides in the nucleus. The protein localises to the cytoplasm. It localises to the perinuclear region. Essential for biological clock functions. Determines the period length of circadian and ultradian rhythms; an increase in PER dosage leads to shortened circadian rhythms and a decrease leads to lengthened circadian rhythms. Essential for the circadian rhythmicity of locomotor activity, eclosion behavior, and for the rhythmic component of the male courtship song that originates in the thoracic nervous system. The biological cycle depends on the rhythmic formation and nuclear localization of the TIM-PER complex. Light induces the degradation of TIM, which promotes elimination of PER. Nuclear activity of the heterodimer coordinatively regulates PER and TIM transcription through a negative feedback loop. Behaves as a negative element in circadian transcriptional loop. Does not appear to bind DNA, suggesting indirect transcriptional inhibition. The chain is Period circadian protein (per) from Drosophila teissieri (Fruit fly).